We begin with the raw amino-acid sequence, 1332 residues long: Sister chromatid cohesion protein PDS5 homolog A (1332 aa).

Met-1 carries the post-translational modification N-acetylmethionine. The stretch at 392–428 (ALVNDQLLGFVRERTLDKRWRVRKEAMMGLAQLYKKY) is one HEAT repeat. Position 1096 is a phosphoserine (Ser-1096). The tract at residues 1138 to 1332 (GVLGTVNKPL…PAERQIDLQR (195 aa)) is disordered. Lys-1145 carries the post-translational modification N6-acetyllysine. The span at 1160–1173 (GTETGSNINANSEL) shows a compositional bias: polar residues. Ser-1174 and Ser-1194 each carry phosphoserine. Thr-1207 is subject to Phosphothreonine. An N6-acetyllysine modification is found at Lys-1210. A compositionally biased stretch (polar residues) spans 1222-1232 (SDQSTQGNISS). Lys-1288 is modified (N6-acetyllysine). Ser-1303 carries the phosphoserine modification. The segment covering 1316 to 1332 (DGAKKAVPAERQIDLQR) has biased composition (basic and acidic residues).

The protein belongs to the PDS5 family. As to quaternary structure, interacts with the cohesin complex. Interacts with WAPL (via FGF motifs) or CDCA5 (via the FGF motif); the interaction is direct, cohesin-dependent and competitive. Interacts with SMC3. Interacts with TP63.

It localises to the nucleus. Probable regulator of sister chromatid cohesion in mitosis which may stabilize cohesin complex association with chromatin. May couple sister chromatid cohesion during mitosis to DNA replication. Cohesion ensures that chromosome partitioning is accurate in both meiotic and mitotic cells and plays an important role in DNA repair. This Mus musculus (Mouse) protein is Sister chromatid cohesion protein PDS5 homolog A (Pds5a).